Here is a 171-residue protein sequence, read N- to C-terminus: Disulfide bond formation protein B (171 aa).

Residues M1–V8 are Cytoplasmic-facing. A helical membrane pass occupies residues S9–Y25. Topologically, residues L26–V43 are periplasmic. An intrachain disulfide couples C35 to C38. The helical transmembrane segment at G44 to P60 threads the bilayer. The Cytoplasmic segment spans residues V61–R67. A helical transmembrane segment spans residues F68–G85. At R86–V142 the chain is on the periplasmic side. Cysteines 101 and 128 form a disulfide. Residues W143–R161 traverse the membrane as a helical segment. The Cytoplasmic segment spans residues F162–K171.

Belongs to the DsbB family.

It localises to the cell inner membrane. In terms of biological role, required for disulfide bond formation in some periplasmic proteins. Acts by oxidizing the DsbA protein. This is Disulfide bond formation protein B from Acinetobacter baumannii (strain ATCC 17978 / DSM 105126 / CIP 53.77 / LMG 1025 / NCDC KC755 / 5377).